The sequence spans 1785 residues: BCL-6 corepressor-like protein 1 (1785 aa).

Disordered stretches follow at residues 65–101, 113–137, and 343–368; these read VGSG…KMDY, VPLS…NSRA, and ASTP…GPPS. The segment covering 83-97 has biased composition (basic and acidic residues); that stretch reads KLGHKSEDKPDDPQP. Ser-496 is modified (phosphoserine). Composition is skewed to polar residues over residues 527-539 and 586-600; these read PCTS…TTQP and GTEQ…TFSP. 2 disordered regions span residues 527-550 and 562-646; these read PCTS…PLAD and PTPQ…PMPV. Residues Ser-599 and Ser-613 each carry the phosphoserine modification. Lys-747 participates in a covalent cross-link: Glycyl lysine isopeptide (Lys-Gly) (interchain with G-Cter in SUMO2). Disordered stretches follow at residues 753 to 781, 876 to 901, and 937 to 977; these read IIDQ…QPST, SSSE…EQDP, and VQPS…LKLA. A phosphoserine mark is found at Ser-1029 and Ser-1033. A Glycyl lysine isopeptide (Lys-Gly) (interchain with G-Cter in SUMO2) cross-link involves residue Lys-1092. Disordered regions lie at residues 1107–1293 and 1312–1487; these read PDDV…QGRR and WDTN…PEAR. Ser-1162 carries the post-translational modification Phosphoserine. Residues 1176-1185 are compositionally biased toward basic residues; the sequence is VRGKHKHRKP. Residues 1195–1213 show a composition bias toward basic and acidic residues; sequence KRADSHEEGSLEKKAKSSF. A compositionally biased stretch (polar residues) spans 1222–1234; sequence STRTRSQSGSICS. Over residues 1271 to 1284 the composition is skewed to basic and acidic residues; the sequence is TQRDTQYRSHHAQD. Residues 1314 to 1324 show a composition bias toward acidic residues; the sequence is TNEEEEEEEEE. A Nuclear localization signal motif is present at residues 1328–1336; sequence KRKKRRRQK. Basic residues predominate over residues 1328 to 1339; it reads KRKKRRRQKSRK. A compositionally biased stretch (basic and acidic residues) spans 1352–1363; it reads EQRRKGRADLKA. The span at 1440 to 1449 shows a compositional bias: polar residues; sequence WSQQKTRSPK. The span at 1461–1480 shows a compositional bias: low complexity; sequence TPSKSRSASSEEASESPTAR. Ser-1476 bears the Phosphoserine mark. ANK repeat units follow at residues 1529-1558, 1562-1591, and 1595-1623; these read AGYT…NVNC, DGTR…DPTL, and SGQT…QGRA. The PCGF Ub-like fold domain (PUFD); required for the interaction with the KDM2B-SKP1 heterodimeric complex stretch occupies residues 1668-1785; the sequence is DDFMFELSDK…SEVEFQSCNS (118 aa).

The protein belongs to the BCOR family. Interacts with PCGF1, forming heterodimers. The PCGF1-BCORL1 heterodimeric complex interacts with the KDM2B-SKP1 heterodimeric complex to form a homotetrameric polycomb repression complex 1 (PRC1.1). Interacts with SKP1. Interacts with CTBP1, HDAC4, HDAC5 and HDAC7. In terms of tissue distribution, detected in testis and prostate. Detected at lower levels in peripheral blood leukocytes and spleen. Mainly expressed in the spermatogonia and primary spermatocytes.

The protein resides in the nucleus. Its function is as follows. Transcriptional corepressor. May specifically inhibit gene expression when recruited to promoter regions by sequence-specific DNA-binding proteins such as BCL6. This repression may be mediated at least in part by histone deacetylase activities which can associate with this corepressor. This Homo sapiens (Human) protein is BCL-6 corepressor-like protein 1.